Here is a 364-residue protein sequence, read N- to C-terminus: Coproporphyrin III ferrochelatase (364 aa).

Fe-coproporphyrin III contacts are provided by Arg-29 and Tyr-118. Fe(2+) is bound by residues His-169 and Glu-250.

Belongs to the ferrochelatase family.

Its subcellular location is the cytoplasm. The catalysed reaction is Fe-coproporphyrin III + 2 H(+) = coproporphyrin III + Fe(2+). The protein operates within porphyrin-containing compound metabolism; protoheme biosynthesis. Functionally, involved in coproporphyrin-dependent heme b biosynthesis. Catalyzes the insertion of ferrous iron into coproporphyrin III to form Fe-coproporphyrin III. This Streptococcus pneumoniae (strain Hungary19A-6) protein is Coproporphyrin III ferrochelatase.